A 218-amino-acid chain; its full sequence is Protein U63 (218 aa).

It belongs to the herpesviridae UL92 family.

In Homo sapiens (Human), this protein is Protein U63 (U63).